Reading from the N-terminus, the 625-residue chain is 1-deoxy-D-xylulose-5-phosphate synthase (625 aa).

Residues histidine 80 and 121–123 each bind thiamine diphosphate; that span reads GHS. Residue aspartate 152 participates in Mg(2+) binding. Thiamine diphosphate is bound by residues 153–154, asparagine 181, tyrosine 290, and glutamate 371; that span reads GS. Asparagine 181 is a Mg(2+) binding site.

This sequence belongs to the transketolase family. DXPS subfamily. Homodimer. It depends on Mg(2+) as a cofactor. The cofactor is thiamine diphosphate.

The catalysed reaction is D-glyceraldehyde 3-phosphate + pyruvate + H(+) = 1-deoxy-D-xylulose 5-phosphate + CO2. It functions in the pathway metabolic intermediate biosynthesis; 1-deoxy-D-xylulose 5-phosphate biosynthesis; 1-deoxy-D-xylulose 5-phosphate from D-glyceraldehyde 3-phosphate and pyruvate: step 1/1. Catalyzes the acyloin condensation reaction between C atoms 2 and 3 of pyruvate and glyceraldehyde 3-phosphate to yield 1-deoxy-D-xylulose-5-phosphate (DXP). This chain is 1-deoxy-D-xylulose-5-phosphate synthase, found in Haemophilus influenzae (strain PittGG).